A 316-amino-acid polypeptide reads, in one-letter code: MAGLSSLPSRVVVLMGGPSAEREVSLSTGRGCAEALRGEGFDVIEVDPGVTHAGAELCARLQEIQPDVVFNALHGRWGEDGCVQGLLEWMRLPYTHSGVLSSALAMDKTRAKTALKAHGLPVVDSIIAPKEAVVAAHVMATPYVVKPNNEGSSVGVYLVNEAANGPPHLSDDMPDEVMVETYAPGRELTVSVLGDAPGDPGALTVTDILTDGWYDYDAKYKPGGSRHVVPAQIPQEIWDACMDMAVRAHTILGCKGVSRTDYRWDEARGLDGLIILEVNTQPGMTPTSLTPEQGEAVGMSFGKLCRWLVEDATCDR.

The ATP-grasp domain maps to 112-310; that stretch reads KTALKAHGLP…FGKLCRWLVE (199 aa). 139-189 is a binding site for ATP; it reads MATPYVVKPNNEGSSVGVYLVNEAANGPPHLSDDMPDEVMVETYAPGRELT. Residues Asp261, Glu277, and Asn279 each contribute to the Mg(2+) site.

It belongs to the D-alanine--D-alanine ligase family. Mg(2+) is required as a cofactor. It depends on Mn(2+) as a cofactor.

The protein resides in the cytoplasm. It carries out the reaction 2 D-alanine + ATP = D-alanyl-D-alanine + ADP + phosphate + H(+). It functions in the pathway cell wall biogenesis; peptidoglycan biosynthesis. Functionally, cell wall formation. The chain is D-alanine--D-alanine ligase from Jannaschia sp. (strain CCS1).